A 273-amino-acid chain; its full sequence is 2,3,4,5-tetrahydropyridine-2,6-dicarboxylate N-succinyltransferase (273 aa).

Positions 104 and 141 each coordinate substrate.

Belongs to the transferase hexapeptide repeat family. In terms of assembly, homotrimer.

It localises to the cytoplasm. The enzyme catalyses (S)-2,3,4,5-tetrahydrodipicolinate + succinyl-CoA + H2O = (S)-2-succinylamino-6-oxoheptanedioate + CoA. It participates in amino-acid biosynthesis; L-lysine biosynthesis via DAP pathway; LL-2,6-diaminopimelate from (S)-tetrahydrodipicolinate (succinylase route): step 1/3. In Neisseria meningitidis serogroup B (strain ATCC BAA-335 / MC58), this protein is 2,3,4,5-tetrahydropyridine-2,6-dicarboxylate N-succinyltransferase.